We begin with the raw amino-acid sequence, 433 residues long: Histidinol dehydrogenase (433 aa).

NAD(+) is bound by residues Tyr-133, Gln-194, and Asn-217. The substrate site is built by Ser-240, Gln-262, and His-265. Residues Gln-262 and His-265 each contribute to the Zn(2+) site. Residues Glu-330 and His-331 each act as proton acceptor in the active site. Residues His-331, Asp-364, Glu-418, and His-423 each coordinate substrate. Asp-364 contributes to the Zn(2+) binding site. His-423 serves as a coordination point for Zn(2+).

This sequence belongs to the histidinol dehydrogenase family. Zn(2+) is required as a cofactor.

The catalysed reaction is L-histidinol + 2 NAD(+) + H2O = L-histidine + 2 NADH + 3 H(+). Its pathway is amino-acid biosynthesis; L-histidine biosynthesis; L-histidine from 5-phospho-alpha-D-ribose 1-diphosphate: step 9/9. Its function is as follows. Catalyzes the sequential NAD-dependent oxidations of L-histidinol to L-histidinaldehyde and then to L-histidine. The protein is Histidinol dehydrogenase of Dechloromonas aromatica (strain RCB).